We begin with the raw amino-acid sequence, 236 residues long: uncharacterized protein (236 aa).

An N-terminal signal peptide occupies residues 1–23; sequence MRRILSILVFAIMLAGCSSNAST. The disordered stretch occupies residues 22-62; sequence STEKQHAGGEKTVKAEPQSTSSQKDSTDDYQPNSQVTDDRT. A compositionally biased stretch (basic and acidic residues) spans 24-35; the sequence is EKQHAGGEKTVK.

This is an uncharacterized protein from Bacillus subtilis (strain 168).